Reading from the N-terminus, the 469-residue chain is MNPNQKIITIGSVSLTFAAICFLMQIAILVTTVTLNFKQYECDPPATNQVMPCEPIIIERNITEIVYLTNTTIEREICPKLVEYRNWSKPQCKITGFAPFSKDNSIRLSAGGDIWVTREPYVSCDPGRCYQFALGQGTTLDNKHSNDTIHDRTPHRTLLMNELGVPFHLGTRQVCIAWSSSSCHDGKAWLHVCITGYDKNATASFIYDGRLVDSIGSWSKNILRTQESECVCINGTCTVVMTDGSASGRADTRILFIEEGRIVHISPLSGSAQHVEECSCYPRYPGVRCICRDNWKGSNRPVVDINVKDYSINSSYVCSGLVGDTPRNNDRSSNSYCQNPNNEKGNHGVKGWAFDDGNDVWMGRTISEDSRSGYQTFKVIGGWSTPNSKLQINRQVIVDSDNRSGYSGIFSVEGKSCINRCFYVELIRGRRQETRVWWTSNSIVVFCGTSGTYGTGSWPDGADINLMPI.

At Met-1 to Thr-9 the chain is on the intravirion side. Residues Ile-10–Val-30 form a helical membrane-spanning segment. The involved in apical transport and lipid raft association stretch occupies residues Gly-11–Val-33. Over Thr-31 to Ile-469 the chain is Virion surface. The interval Asn-36–Ser-88 is hypervariable stalk region. Residues Asn-61, Asn-70, and Asn-86 are each glycosylated (N-linked (GlcNAc...) asparagine; by host). The head of neuraminidase stretch occupies residues Gln-91–Ile-469. Cystine bridges form between Cys-92–Cys-417, Cys-124–Cys-129, Cys-183–Cys-230, Cys-232–Cys-237, Cys-278–Cys-291, Cys-280–Cys-289, Cys-318–Cys-337, and Cys-421–Cys-447. A substrate-binding site is contributed by Arg-118. An N-linked (GlcNAc...) asparagine; by host glycan is attached at Asn-146. The Proton donor/acceptor role is filled by Asp-151. A substrate-binding site is contributed by Arg-152. N-linked (GlcNAc...) asparagine; by host glycans are attached at residues Asn-200 and Asn-234. Residue Glu-276–Glu-277 coordinates substrate. Arg-292 is a binding site for substrate. Ca(2+) contacts are provided by Asp-293 and Gly-297. Asn-313 carries an N-linked (GlcNAc...) asparagine; by host glycan. Asp-324 is a Ca(2+) binding site. Arg-371 lines the substrate pocket. N-linked (GlcNAc...) asparagine; by host glycosylation is present at Asn-402. The Nucleophile role is filled by Tyr-406.

It belongs to the glycosyl hydrolase 34 family. As to quaternary structure, homotetramer. Requires Ca(2+) as cofactor. N-glycosylated.

Its subcellular location is the virion membrane. It localises to the host apical cell membrane. It carries out the reaction Hydrolysis of alpha-(2-&gt;3)-, alpha-(2-&gt;6)-, alpha-(2-&gt;8)- glycosidic linkages of terminal sialic acid residues in oligosaccharides, glycoproteins, glycolipids, colominic acid and synthetic substrates.. Its activity is regulated as follows. Inhibited by the neuraminidase inhibitors zanamivir (Relenza) and oseltamivir (Tamiflu). These drugs interfere with the release of progeny virus from infected cells and are effective against all influenza strains. Resistance to neuraminidase inhibitors is quite rare. Functionally, catalyzes the removal of terminal sialic acid residues from viral and cellular glycoconjugates. Cleaves off the terminal sialic acids on the glycosylated HA during virus budding to facilitate virus release. Additionally helps virus spread through the circulation by further removing sialic acids from the cell surface. These cleavages prevent self-aggregation and ensure the efficient spread of the progeny virus from cell to cell. Otherwise, infection would be limited to one round of replication. Described as a receptor-destroying enzyme because it cleaves a terminal sialic acid from the cellular receptors. May facilitate viral invasion of the upper airways by cleaving the sialic acid moieties on the mucin of the airway epithelial cells. Likely to plays a role in the budding process through its association with lipid rafts during intracellular transport. May additionally display a raft-association independent effect on budding. Plays a role in the determination of host range restriction on replication and virulence. Sialidase activity in late endosome/lysosome traffic seems to enhance virus replication. The sequence is that of Neuraminidase from Influenza A virus (strain A/Swine/Kanagawa/2/1978 H1N2).